The chain runs to 173 residues: Ribosome maturation factor RimM (173 aa).

A PRC barrel domain is found at 97-170 (EHEYYYHEII…RIRVHIMEGL (74 aa)).

This sequence belongs to the RimM family. In terms of assembly, binds ribosomal protein uS19.

It is found in the cytoplasm. Functionally, an accessory protein needed during the final step in the assembly of 30S ribosomal subunit, possibly for assembly of the head region. Essential for efficient processing of 16S rRNA. May be needed both before and after RbfA during the maturation of 16S rRNA. It has affinity for free ribosomal 30S subunits but not for 70S ribosomes. The polypeptide is Ribosome maturation factor RimM (Shouchella clausii (strain KSM-K16) (Alkalihalobacillus clausii)).